A 185-amino-acid chain; its full sequence is Ribosome-recycling factor (185 aa).

A disordered region spans residues 138–160 (AMDKAVKDGEVGEDEGARGEKEL).

This sequence belongs to the RRF family.

It is found in the cytoplasm. Functionally, responsible for the release of ribosomes from messenger RNA at the termination of protein biosynthesis. May increase the efficiency of translation by recycling ribosomes from one round of translation to another. This chain is Ribosome-recycling factor, found in Micrococcus luteus (strain ATCC 4698 / DSM 20030 / JCM 1464 / CCM 169 / CCUG 5858 / IAM 1056 / NBRC 3333 / NCIMB 9278 / NCTC 2665 / VKM Ac-2230) (Micrococcus lysodeikticus).